A 399-amino-acid chain; its full sequence is Probable F-box protein At4g22060 (399 aa).

Positions 12-48 (SWSKLPLDLLIMVFERLGFVDFQRTKSVCLAWLYASR) constitute an F-box domain.

In Arabidopsis thaliana (Mouse-ear cress), this protein is Probable F-box protein At4g22060.